Reading from the N-terminus, the 825-residue chain is MEDASGSYPFGVATADGTPLQIDAENAAVRGINEWSWGSMSPGIPPAAFRPYSLPQFMDRPGPYPYQSSSSSSRELSGSAAKVAIPRTTSASSQSQRRRSARACEPCRQRKIKCDGSKPVCRQCIDHNVSCFFVDVKRVRDQKQLGLLGKKVEQYERLLQELEKEVDENAARRIRKVLRGTDISSPTDDGGDSDSSISSIGSLEALDLVEEDLNRSEKTVATGFFGKNSEVAWMQKLEDEAKSRNRKKEDSTDMEDGVAGGHTMTPPQKQETAMAAMSYYLDDIGIPLMDSVDPYALPPKDLANRFFTAFMDSVHPSFNVVRKTAFVSQYRQFFSQPAQPPQRWLAILNMIFAIGCRYTQATSGRPDSGDYNDLVYLNRARKLTLSENVIFEHADLQQIQVEFLVALYFVSKCQINRAFKFSSMAFRSAVSLGINLRFVDDRTQYPAKEARIRLWWSIFLLEHLLTAITGRVSCVGESLSATPLPIPYEEEAFGRPDVLPLLQDSSLRMTRLKLTLLQSDEESRADVSWLPSCEPSPSLYFHCIVDLATITQAIINKVYSIQGLRERASQVEQRIRRFSFNLDMWLSKVPEAYRFTSGSGDQLDLPSDRNAPWMRERISLAMSYYSSRLTLCRPCLTHTGLAPGDPSPDPAVPPSARQGSRRISSSRMQFNTAMALTCVRSARSLLCCIPETPDITWLTTMTPWWCILHYIMQATTTILLHLSSWPTRLPNDPMHQVSADIEATSRETKKALRWLHHMAYKYPAARRAFRQCNSIVRRITPSLGIDISDIPSGKDLPTEDDAYHLRDIDNTPSSRAGSMEFERHH.

Positions 60–102 (RPGPYPYQSSSSSSRELSGSAAKVAIPRTTSASSQSQRRRSAR) are disordered. Residues 68–79 (SSSSSSRELSGS) show a composition bias toward low complexity. The segment at residues 104–131 (CEPCRQRKIKCDGSKPVCRQCIDHNVSC) is a DNA-binding region (zn(2)-C6 fungal-type). Over residues 239-251 (DEAKSRNRKKEDS) the composition is skewed to basic and acidic residues. Disordered stretches follow at residues 239-267 (DEAK…MTPP), 642-663 (APGD…SRRI), and 804-825 (HLRD…ERHH).

The protein localises to the nucleus. Functionally, transcription factor that negatively regulates the biosynthesis of ochratoxin A (OTA), a mycotoxin composed of a chlorinated type I polyketide dihydroisocoumarin moiety linked to L-phenylalanine, and demonstrated to have nephrotoxic, immunotoxic, genotoxic, neurotoxic, and teratogenic properties. Also regulates cellular redox homeostasis and sensitivity to H(2)O(2). Carbon sources such as sucrose, glucose and arabinose repress gal4, leading to up-regulation of OTA biosynthetic genes and altered cellular redox homeostasis. The polypeptide is Transcription regulator galc (Aspergillus niger (strain ATCC MYA-4892 / CBS 513.88 / FGSC A1513)).